Reading from the N-terminus, the 231-residue chain is MQDVFRQIDWERYELIPTIVQEKQSQQILMLAYSSKQSLELSLQTHLAHYFSRSKQRIWQKGEQSGHIQHIKEVKLDCDNDSLIFIVEQVGVACHTGEKSCFFRIFSLDKNCQNPPVSMPQKYPIGVYHILDDLYHIIEQRRCENIEHSYTASLLAKGVNGIGKKIIEEAGELCFALKDKDEKAIIYECADLFYHILVGLALEHITPERVLQELRRRMGQSGIEEKASRKH.

The phosphoribosyl-AMP cyclohydrolase stretch occupies residues 1 to 130; that stretch reads MQDVFRQIDW…QKYPIGVYHI (130 aa). The segment at 131-231 is phosphoribosyl-ATP pyrophosphohydrolase; the sequence is LDDLYHIIEQ…GIEEKASRKH (101 aa).

This sequence in the N-terminal section; belongs to the PRA-CH family. It in the C-terminal section; belongs to the PRA-PH family.

The protein localises to the cytoplasm. The enzyme catalyses 1-(5-phospho-beta-D-ribosyl)-ATP + H2O = 1-(5-phospho-beta-D-ribosyl)-5'-AMP + diphosphate + H(+). It carries out the reaction 1-(5-phospho-beta-D-ribosyl)-5'-AMP + H2O = 1-(5-phospho-beta-D-ribosyl)-5-[(5-phospho-beta-D-ribosylamino)methylideneamino]imidazole-4-carboxamide. Its pathway is amino-acid biosynthesis; L-histidine biosynthesis; L-histidine from 5-phospho-alpha-D-ribose 1-diphosphate: step 2/9. It participates in amino-acid biosynthesis; L-histidine biosynthesis; L-histidine from 5-phospho-alpha-D-ribose 1-diphosphate: step 3/9. The chain is Histidine biosynthesis bifunctional protein HisIE from Helicobacter hepaticus (strain ATCC 51449 / 3B1).